The sequence spans 193 residues: MANNRTLARRRRAFSPLTVVMLAVTLVAFMGVPLSSTGAADAADPVESVEANRRGYTSYGEPPVAVGTSEEYVNSSELAGSRDKGNAEAEEEAAEVETDVQPSSVTIDTEERAAPSQVQVQQERMEEADDAPKPVPVRSAVPSTVAKRQQARHRVIGTAVIAAVVAALLWKFSRRRSGAPREGGENENGGEEK.

N4 carries an N-linked (GlcNAc...) asparagine glycan. Residues 14–34 form a helical membrane-spanning segment; that stretch reads FSPLTVVMLAVTLVAFMGVPL. N74 is a glycosylation site (N-linked (GlcNAc...) asparagine). The tract at residues 75–140 is disordered; the sequence is SSELAGSRDK…APKPVPVRSA (66 aa). Over residues 88-98 the composition is skewed to acidic residues; it reads EAEEEAAEVET. A helical membrane pass occupies residues 153–173; that stretch reads HRVIGTAVIAAVVAALLWKFS. The tract at residues 174–193 is disordered; the sequence is RRRSGAPREGGENENGGEEK.

This sequence belongs to the Gra6 family.

It is found in the membrane. The chain is Dense granule protein 2 (DG2) from Neospora caninum (Coccidian parasite).